A 101-amino-acid chain; its full sequence is Interleukin-8 (101 aa).

The N-terminal stretch at 1-22 (MTSKLAVALLAAFVLSAALCEA) is a signal peptide. R27 carries the post-translational modification Citrulline. Disulfide bonds link C34–C61 and C36–C77.

The protein belongs to the intercrine alpha (chemokine CxC) family. In terms of assembly, homodimer. Interacts with TNFAIP6 (via Link domain); this interaction interferes with chemokine binding to glycosaminoglycans. In terms of processing, citrullination at Arg-27 prevents proteolysis, and dampens tissue inflammation, it also enhances leukocytosis, possibly through impaired chemokine clearance from the blood circulation.

The protein localises to the secreted. Chemotactic factor that mediates inflammatory response by attracting neutrophils, basophils, and T-cells to clear pathogens and protect the host from infection. Also plays an important role in neutrophil activation. Released in response to an inflammatory stimulus, exerts its effect by binding to the G-protein-coupled receptors CXCR1 and CXCR2, primarily found in neutrophils, monocytes and endothelial cells. G-protein heterotrimer (alpha, beta, gamma subunits) constitutively binds to CXCR1/CXCR2 receptor and activation by IL8 leads to beta and gamma subunits release from Galpha (GNAI2 in neutrophils) and activation of several downstream signaling pathways including PI3K and MAPK pathways. The chain is Interleukin-8 (CXCL8) from Canis lupus familiaris (Dog).